The primary structure comprises 49 residues: DNA-directed RNA polymerase subunit Rpo12 (49 aa).

Zn(2+) contacts are provided by C11, C27, and C30.

It belongs to the archaeal Rpo12/eukaryotic RPC10 RNA polymerase subunit family. In terms of assembly, part of the RNA polymerase complex. Zn(2+) serves as cofactor.

It is found in the cytoplasm. It carries out the reaction RNA(n) + a ribonucleoside 5'-triphosphate = RNA(n+1) + diphosphate. DNA-dependent RNA polymerase (RNAP) catalyzes the transcription of DNA into RNA using the four ribonucleoside triphosphates as substrates. In Pyrococcus furiosus (strain ATCC 43587 / DSM 3638 / JCM 8422 / Vc1), this protein is DNA-directed RNA polymerase subunit Rpo12.